Here is an 839-residue protein sequence, read N- to C-terminus: Genome polyprotein (839 aa).

A compositionally biased stretch (polar residues) spans 55–66 (TAEVGSHQSEPL). Residues 55 to 76 (TAEVGSHQSEPLKTSVDKPGSK) form a disordered region. 2 short sequence motifs ((L)YPX(n)L motif) span residues 167 to 171 (YPHGL) and 200 to 205 (YPVWEL). Polar residues predominate over residues 496-510 (SGGFSTTVSTEQNVP). Disordered regions lie at residues 496–530 (SGGF…NKGK) and 773–792 (GDLE…RFES). The tract at residues 766-836 (MLDRIAGGDL…RKLKGLFSQS (71 aa)) is involved in P1-2A pentamerization. Positions 780–792 (DDPRTDEDRRFES) are enriched in basic and acidic residues.

Belongs to the picornaviridae polyprotein family. Homodimer. Homomultimer; probably interacts with membranes in a multimeric form. Seems to assemble into amyloid-like fibers. In terms of assembly, homopentamer. Homooligomer. As to quaternary structure, interacts with capsid protein VP2. Interacts with capsid protein VP3. Interacts with capsid protein VP1. Interacts with capsid protein VP3. In terms of assembly, interacts with capsid protein VP1. Interacts with capsid protein VP2. In terms of processing, specific enzymatic cleavages by viral protease in vivo yield a variety of precursors and mature proteins. Polyprotein processing intermediates are produced, such as P1-2A which is a functional precursor of the structural proteins, VP0 which is a VP4-VP2 precursor, VP1-2A precursor, 3ABC precursor which is a stable and catalytically active precursor of 3A, 3B and 3C proteins, 3AB and 3CD precursors. The assembly signal 2A is removed from VP1-2A by a host protease, possibly host Cathepsin L. This cleavage occurs over a region of 3 amino-acids probably generating VP1 proteins with heterogeneous C-termini. During virion maturation, immature virions are rendered infectious following cleavage of VP0 into VP4 and VP2. This maturation seems to be an autocatalytic event triggered by the presence of RNA in the capsid and is followed by a conformational change of the particle. Post-translationally, the assembly signal 2A is removed from VP1-2A by a host protease, possibly host Cathepsin L in naked virions. This cleavage does not occur in enveloped virions. This cleavage occurs over a region of 3 amino-acids probably generating VP1 proteins with heterogeneous C-termini. In terms of processing, unlike other picornaviruses, does not seem to be myristoylated.

The protein resides in the virion. Its subcellular location is the host endosome. The protein localises to the host multivesicular body. It is found in the host membrane. Functionally, capsid proteins VP1, VP2, and VP3 form a closed capsid enclosing the viral positive strand RNA genome. All these proteins contain a beta-sheet structure called beta-barrel jelly roll. Together they form an icosahedral capsid (T=3) composed of 60 copies of each VP1, VP2, and VP3, with a diameter of approximately 300 Angstroms. VP1 is situated at the 12 fivefold axes, whereas VP2 and VP3 are located at the quasi-sixfold axes. The naked capsid interacts with the host receptor HAVCR1 to provide virion attachment to and probably entry into the target cell. VP0 precursor is a component of the immature procapsids. Its function is as follows. Plays a role in the assembly of the 12 pentamers into an icosahedral structure. Has not been detected in mature virions, supposedly owing to its small size. In terms of biological role, precursor component of immature procapsids that corresponds to an extended form of the structural protein VP1. After maturation, possibly by the host Cathepsin L, the assembly signal 2A is cleaved to give rise to the mature VP1 protein. Functionally, affects membrane integrity and causes an increase in membrane permeability. Functions as a viroporin. Affects membrane integrity and causes an increase in membrane permeability. Involved in host intracellular membrane rearrangements probably to give rise to the viral factories. Does not disrupt calcium homeostasis or glycoprotein trafficking. Antagonizes the innate immune response of the host by suppressing IFN-beta synthesis, which it achieves by interfering with the RIG-I/IFIH1 pathway. The chain is Genome polyprotein from Callithrix (Owl-faced monkey).